A 61-amino-acid chain; its full sequence is Small ribosomal subunit protein uS14B (61 aa).

The Zn(2+) site is built by cysteine 24, cysteine 27, cysteine 40, and cysteine 43.

The protein belongs to the universal ribosomal protein uS14 family. Zinc-binding uS14 subfamily. In terms of assembly, part of the 30S ribosomal subunit. Contacts proteins S3 and S10. Zn(2+) is required as a cofactor.

Functionally, binds 16S rRNA, required for the assembly of 30S particles and may also be responsible for determining the conformation of the 16S rRNA at the A site. The chain is Small ribosomal subunit protein uS14B from Mycobacteroides abscessus (strain ATCC 19977 / DSM 44196 / CCUG 20993 / CIP 104536 / JCM 13569 / NCTC 13031 / TMC 1543 / L948) (Mycobacterium abscessus).